The sequence spans 333 residues: MMEQLLNSAPSWTNLVIFFGLGLALLFAVLAFVTYGILAERKVMGFMQGRYGPNQVGGRWGLLQTVADVLKLLLKEDTIPKAADKPLFILAPIIAFAPAFMVLATLPFTDAFQFADIGVGLLYYIAVSGLTTIGVVAGGWASNNKYALIGAMRAAAQMISYEIPLVVSVLGVVLLTGSLNLNDIVEAQKDVWYIFIQPIAFIVFFIAAVAELNRTPFDLPEAESELVAGFHVEYSGFRWAFFMLSEYVYLFAMAALTTILFLGGWHPVMFLDFIPGAVWFALKFSIVVFVLIWFRVTFPRLRADQLMELGWKVLFPVALLNIFVTALIQELFF.

A run of 8 helical transmembrane segments spans residues 15–35 (LVIFFGLGLALLFAVLAFVTY), 88–108 (FILAPIIAFAPAFMVLATLPF), 117–137 (IGVGLLYYIAVSGLTTIGVVA), 159–179 (ISYEIPLVVSVLGVVLLTGSL), 191–211 (VWYIFIQPIAFIVFFIAAVAE), 250–270 (LFAMAALTTILFLGGWHPVMF), 273–293 (FIPGAVWFALKFSIVVFVLIW), and 313–333 (VLFPVALLNIFVTALIQELFF).

This sequence belongs to the complex I subunit 1 family. As to quaternary structure, NDH-1 is composed of 14 different subunits. Subunits NuoA, H, J, K, L, M, N constitute the membrane sector of the complex.

It localises to the cell membrane. It catalyses the reaction a quinone + NADH + 5 H(+)(in) = a quinol + NAD(+) + 4 H(+)(out). Functionally, NDH-1 shuttles electrons from NADH, via FMN and iron-sulfur (Fe-S) centers, to quinones in the respiratory chain. The immediate electron acceptor for the enzyme in this species is believed to be ubiquinone. Couples the redox reaction to proton translocation (for every two electrons transferred, four hydrogen ions are translocated across the cytoplasmic membrane), and thus conserves the redox energy in a proton gradient. This subunit may bind ubiquinone. This is NADH-quinone oxidoreductase subunit H from Geobacillus sp. (strain WCH70).